The primary structure comprises 117 residues: SPbeta prophage-derived uncharacterized protein YosL (117 aa).

In Bacillus subtilis (strain 168), this protein is SPbeta prophage-derived uncharacterized protein YosL (yosL).